A 496-amino-acid polypeptide reads, in one-letter code: Putative (R)-citramalate synthase CimA (496 aa).

The region spanning 3 to 253 is the Pyruvate carboxyltransferase domain; it reads VRVLDTTLRD…DTSINIEMLY (251 aa).

This sequence belongs to the alpha-IPM synthase/homocitrate synthase family. Homodimer.

The catalysed reaction is pyruvate + acetyl-CoA + H2O = (3R)-citramalate + CoA + H(+). The protein operates within amino-acid biosynthesis; L-isoleucine biosynthesis; 2-oxobutanoate from pyruvate: step 1/3. In terms of biological role, catalyzes the condensation of pyruvate and acetyl-coenzyme A to form (R)-citramalate. This Methanothermobacter thermautotrophicus (strain ATCC 29096 / DSM 1053 / JCM 10044 / NBRC 100330 / Delta H) (Methanobacterium thermoautotrophicum) protein is Putative (R)-citramalate synthase CimA.